The following is a 188-amino-acid chain: MATYYSNDFRAGLKIMLDGEPYAVEASEFVKPGKGQAFARVKLRRLLTGTRVEKTFKSTDSAEGADVVDMNLTYLYNDGEFWHFMNNETFEQLSADAKAIGDSAKWLLDQAECIVTLWNGQPITVTPPNFVELEIVDTDPGLKGDTAGTGGKPATLSTGAVVKVPLFVQIGEVIKVDTRSGEYVSRVK.

N6-(3,6-diaminohexanoyl)-5-hydroxylysine is present on Lys-34.

This sequence belongs to the elongation factor P family. In terms of processing, may be beta-lysylated on the epsilon-amino group of Lys-34 by the combined action of EpmA and EpmB, and then hydroxylated on the C5 position of the same residue by EpmC (if this protein is present). Lysylation is critical for the stimulatory effect of EF-P on peptide-bond formation. The lysylation moiety may extend toward the peptidyltransferase center and stabilize the terminal 3-CCA end of the tRNA. Hydroxylation of the C5 position on Lys-34 may allow additional potential stabilizing hydrogen-bond interactions with the P-tRNA.

The protein localises to the cytoplasm. The protein operates within protein biosynthesis; polypeptide chain elongation. Its function is as follows. Involved in peptide bond synthesis. Alleviates ribosome stalling that occurs when 3 or more consecutive Pro residues or the sequence PPG is present in a protein, possibly by augmenting the peptidyl transferase activity of the ribosome. Modification of Lys-34 is required for alleviation. This is Elongation factor P from Citrobacter koseri (strain ATCC BAA-895 / CDC 4225-83 / SGSC4696).